A 141-amino-acid chain; its full sequence is ATP synthase epsilon chain (141 aa).

The protein belongs to the ATPase epsilon chain family. As to quaternary structure, F-type ATPases have 2 components, CF(1) - the catalytic core - and CF(0) - the membrane proton channel. CF(1) has five subunits: alpha(3), beta(3), gamma(1), delta(1), epsilon(1). CF(0) has three main subunits: a, b and c.

It is found in the cell inner membrane. In terms of biological role, produces ATP from ADP in the presence of a proton gradient across the membrane. This Burkholderia multivorans (strain ATCC 17616 / 249) protein is ATP synthase epsilon chain.